Here is a 180-residue protein sequence, read N- to C-terminus: Ribulose bisphosphate carboxylase small subunit, chloroplastic (180 aa).

The transit peptide at methionine 1–serine 57 directs the protein to the chloroplast.

The protein belongs to the RuBisCO small chain family. In terms of assembly, heterohexadecamer of 8 large and 8 small subunits.

It is found in the plastid. Its subcellular location is the chloroplast. Its function is as follows. RuBisCO catalyzes two reactions: the carboxylation of D-ribulose 1,5-bisphosphate, the primary event in carbon dioxide fixation, as well as the oxidative fragmentation of the pentose substrate. Both reactions occur simultaneously and in competition at the same active site. Although the small subunit is not catalytic it is essential for maximal activity. The chain is Ribulose bisphosphate carboxylase small subunit, chloroplastic from Marchantia paleacea (Liverwort).